Reading from the N-terminus, the 430-residue chain is MATRLLRGSLRLWGGLCAPRLPTASRCSHSGGEERLESPSAKKLTDIGIRRIFSSEHDIFRESVRKFFQEEVIPHHAEWEKAGEVSRELWEKAGKQGLLGINIAERHGGIGGDLYSAAIVWEEQAYSNCTGPGFSLHSDIVMPYIANYGSEEQIKHFIPQMTAGKCIGAIAMTEPGAGSDLQGVRTNAKKDGSDWILNGSKVFITNGWLSDVVIVVAVTNREARSPAHGISLFLVENGMKGFVKGRKLHKIGLKAQDTAELFFEDVRLPASALLGEENKGFYYLMQELPQERLLIAELAVSASEFMFEETRNYVKQRKAFGKTVAHIQTVQHKLAELKTHICVTRAFVDSCLQLHETKRLESAAASMAKYWASELQNSVAYDCVQLHGGWGYMWEYPIARAYVDARVQPIYGGTNEIMKELIAREIVHDK.

The N-terminal 30 residues, 1-30 (MATRLLRGSLRLWGGLCAPRLPTASRCSHS), are a transit peptide targeting the mitochondrion. At Lys-42 the chain carries N6-acetyllysine. 2 positions are modified to phosphoserine: Ser-54 and Ser-55. An N6-acetyllysine; alternate mark is found at Lys-66 and Lys-81. N6-succinyllysine; alternate occurs at positions 66 and 81. N6-acetyllysine occurs at positions 92 and 95. Residue Lys-165 is modified to N6-succinyllysine. Residues 170–179 (IAMTEPGAGS) and 203–205 (FIT) contribute to the FAD site. Residue Ser-179 participates in substrate binding. 227 to 228 (AH) lines the substrate pocket. At Lys-240 the chain carries N6-succinyllysine. An N6-acetyllysine; alternate mark is found at Lys-254 and Lys-279. An N6-succinyllysine; alternate mark is found at Lys-254 and Lys-279. Residues Tyr-282 and 289-292 (PQER) contribute to the substrate site. Residue Glu-291 is the Proton acceptor of the active site. Arg-317 contacts FAD. Lys-318 is modified (N6-acetyllysine). At Lys-322 the chain carries N6-acetyllysine; alternate. Position 322 is an N6-succinyllysine; alternate (Lys-322). Residue Gln-328 participates in FAD binding. Lys-358 bears the N6-acetyllysine mark. Position 362 is a phosphoserine (Ser-362). 385 to 389 (QLHGG) is an FAD binding site. Residue 412 to 413 (GG) participates in substrate binding. 414-416 (TNE) contributes to the FAD binding site.

It belongs to the acyl-CoA dehydrogenase family. Homotetramer. FAD is required as a cofactor. In terms of processing, acetylation at Lys-318 and Lys-322 in proximity of the cofactor-binding sites strongly reduces catalytic activity. These sites are deacetylated by SIRT3.

The protein localises to the mitochondrion matrix. The catalysed reaction is a long-chain 2,3-saturated fatty acyl-CoA + oxidized [electron-transfer flavoprotein] + H(+) = a long-chain (2E)-enoyl-CoA + reduced [electron-transfer flavoprotein]. It carries out the reaction hexanoyl-CoA + oxidized [electron-transfer flavoprotein] + H(+) = (2E)-hexenoyl-CoA + reduced [electron-transfer flavoprotein]. The enzyme catalyses octanoyl-CoA + oxidized [electron-transfer flavoprotein] + H(+) = (2E)-octenoyl-CoA + reduced [electron-transfer flavoprotein]. It catalyses the reaction decanoyl-CoA + oxidized [electron-transfer flavoprotein] + H(+) = (2E)-decenoyl-CoA + reduced [electron-transfer flavoprotein]. The catalysed reaction is dodecanoyl-CoA + oxidized [electron-transfer flavoprotein] + H(+) = (2E)-dodecenoyl-CoA + reduced [electron-transfer flavoprotein]. It carries out the reaction tetradecanoyl-CoA + oxidized [electron-transfer flavoprotein] + H(+) = (2E)-tetradecenoyl-CoA + reduced [electron-transfer flavoprotein]. The enzyme catalyses oxidized [electron-transfer flavoprotein] + hexadecanoyl-CoA + H(+) = (2E)-hexadecenoyl-CoA + reduced [electron-transfer flavoprotein]. It catalyses the reaction octadecanoyl-CoA + oxidized [electron-transfer flavoprotein] + H(+) = (2E)-octadecenoyl-CoA + reduced [electron-transfer flavoprotein]. The catalysed reaction is eicosanoyl-CoA + oxidized [electron-transfer flavoprotein] + H(+) = (2E)-eicosenoyl-CoA + reduced [electron-transfer flavoprotein]. It carries out the reaction docosanoyl-CoA + oxidized [electron-transfer flavoprotein] + H(+) = (2E)-docosenoyl-CoA + reduced [electron-transfer flavoprotein]. The enzyme catalyses tetracosanoyl-CoA + oxidized [electron-transfer flavoprotein] + H(+) = (2E)-tetracosenoyl-CoA + reduced [electron-transfer flavoprotein]. It catalyses the reaction (5E)-tetradecenoyl-CoA + oxidized [electron-transfer flavoprotein] + H(+) = (2E,5E)-tetradecadienoyl-CoA + reduced [electron-transfer flavoprotein]. The catalysed reaction is (5Z)-tetradecenoyl-CoA + oxidized [electron-transfer flavoprotein] + H(+) = (2E,5Z)-tetradecadienoyl-CoA + reduced [electron-transfer flavoprotein]. It carries out the reaction oxidized [electron-transfer flavoprotein] + (9Z)-octadecenoyl-CoA + H(+) = (2E,9Z)-octadecadienoyl-CoA + reduced [electron-transfer flavoprotein]. It functions in the pathway lipid metabolism; mitochondrial fatty acid beta-oxidation. Functionally, long-chain specific acyl-CoA dehydrogenase is one of the acyl-CoA dehydrogenases that catalyze the first step of mitochondrial fatty acid beta-oxidation, an aerobic process breaking down fatty acids into acetyl-CoA and allowing the production of energy from fats. The first step of fatty acid beta-oxidation consists in the removal of one hydrogen from C-2 and C-3 of the straight-chain fatty acyl-CoA thioester, resulting in the formation of trans-2-enoyl-CoA. Among the different mitochondrial acyl-CoA dehydrogenases, long-chain specific acyl-CoA dehydrogenase can act on saturated and unsaturated acyl-CoAs with 6 to 24 carbons with a preference for 8 to 18 carbons long primary chains. The sequence is that of Long-chain specific acyl-CoA dehydrogenase, mitochondrial from Sus scrofa (Pig).